Consider the following 157-residue polypeptide: SsrA-binding protein (157 aa).

The segment at 132–157 is disordered; it reads VHDKRQAQKDKDWAREKDRLFKKAYK. The segment covering 135–157 has biased composition (basic and acidic residues); that stretch reads KRQAQKDKDWAREKDRLFKKAYK.

Belongs to the SmpB family.

Its subcellular location is the cytoplasm. In terms of biological role, required for rescue of stalled ribosomes mediated by trans-translation. Binds to transfer-messenger RNA (tmRNA), required for stable association of tmRNA with ribosomes. tmRNA and SmpB together mimic tRNA shape, replacing the anticodon stem-loop with SmpB. tmRNA is encoded by the ssrA gene; the 2 termini fold to resemble tRNA(Ala) and it encodes a 'tag peptide', a short internal open reading frame. During trans-translation Ala-aminoacylated tmRNA acts like a tRNA, entering the A-site of stalled ribosomes, displacing the stalled mRNA. The ribosome then switches to translate the ORF on the tmRNA; the nascent peptide is terminated with the 'tag peptide' encoded by the tmRNA and targeted for degradation. The ribosome is freed to recommence translation, which seems to be the essential function of trans-translation. The polypeptide is SsrA-binding protein (Francisella tularensis subsp. tularensis (strain FSC 198)).